The chain runs to 295 residues: 2S seed storage protein (295 aa).

The first 20 residues, 1-20 (MAKQIVLALAFAALVAFATA), serve as a signal peptide directing secretion. A propeptide spanning residues 21-161 (HTTIITTTIE…TITTTVTESN (141 aa)) is cleaved from the precursor. Residues 195-208 (EQQMQQSPRSTRPY) show a composition bias toward polar residues. Residues 195 to 215 (EQQMQQSPRSTRPYQQRPGQQ) are disordered.

This sequence belongs to the 2S seed storage albumins family. The 38 kDa precursor may be cleaved into two polypeptides of approximately the same size. The mature protein is composed of a single polypeptide containing one or more intra-molecular disulfide linkages.

This is a 2S seed storage protein. The polypeptide is 2S seed storage protein (HAG5) (Helianthus annuus (Common sunflower)).